The following is a 126-amino-acid chain: Aspartate 1-decarboxylase (126 aa).

Serine 25 serves as the catalytic Schiff-base intermediate with substrate; via pyruvic acid. Pyruvic acid (Ser) is present on serine 25. Threonine 57 lines the substrate pocket. Catalysis depends on tyrosine 58, which acts as the Proton donor. Residue 73 to 75 (GGA) participates in substrate binding.

This sequence belongs to the PanD family. As to quaternary structure, heterooctamer of four alpha and four beta subunits. The cofactor is pyruvate. Post-translationally, is synthesized initially as an inactive proenzyme, which is activated by self-cleavage at a specific serine bond to produce a beta-subunit with a hydroxyl group at its C-terminus and an alpha-subunit with a pyruvoyl group at its N-terminus.

Its subcellular location is the cytoplasm. The enzyme catalyses L-aspartate + H(+) = beta-alanine + CO2. The protein operates within cofactor biosynthesis; (R)-pantothenate biosynthesis; beta-alanine from L-aspartate: step 1/1. Functionally, catalyzes the pyruvoyl-dependent decarboxylation of aspartate to produce beta-alanine. This is Aspartate 1-decarboxylase from Acinetobacter baumannii (strain AB307-0294).